A 605-amino-acid polypeptide reads, in one-letter code: DNA primase (605 aa).

The segment at 38-62 (CPFHDEKTPSFTVSEDKQICHCFGC) adopts a CHC2-type zinc-finger fold. One can recognise a Toprim domain in the interval 260 to 341 (DEIVLLEGFM…NVFVIQLPSG (82 aa)). Mg(2+) contacts are provided by Glu-266, Asp-310, and Asp-312.

The protein belongs to the DnaG primase family. Monomer. Interacts with DnaB. It depends on Zn(2+) as a cofactor. Requires Mg(2+) as cofactor.

The catalysed reaction is ssDNA + n NTP = ssDNA/pppN(pN)n-1 hybrid + (n-1) diphosphate.. RNA polymerase that catalyzes the synthesis of short RNA molecules used as primers for DNA polymerase during DNA replication. This is DNA primase from Staphylococcus aureus (strain MW2).